The following is a 471-amino-acid chain: Apyrase 1 (471 aa).

Topologically, residues 1–21 are cytoplasmic; that stretch reads MTAKRAIGRHESLADKVHRHR. The helical; Signal-anchor for type II membrane protein transmembrane segment at 22 to 42 threads the bilayer; sequence GLLLVISIPIVLIALVLLLMP. Topologically, residues 43–471 are lumenal; the sequence is GTSTSVSVIE…GSAIEAVSSP (429 aa). 72–82 lines the ATP pocket; it reads VIFDAGSSGSR. The Proton acceptor role is filled by Glu194. An ATP-binding site is contributed by 218-228; it reads GVVDLGGGSVQ. N-linked (GlcNAc...) asparagine glycosylation occurs at Asn333.

Belongs to the GDA1/CD39 NTPase family. Ca(2+) serves as cofactor. Expressed in roots, root hairs, root cap, leaves, stems, trichomes, phloem throughout the plant, guard cells, filaments of young stamens, stipules, papillae of stigmas, pollen, pollen tubes and the abscission zone of siliques.

It is found in the golgi apparatus membrane. The protein localises to the membrane. It carries out the reaction a ribonucleoside 5'-triphosphate + 2 H2O = a ribonucleoside 5'-phosphate + 2 phosphate + 2 H(+). Its function is as follows. Catalyzes the hydrolysis of phosphoanhydride bonds of nucleoside tri- and di-phosphates. Substrate preference is ATP &gt; ADP. Functions with APY2 to reduce extracellular ATP level which is essential for pollen germination and normal plant development. Plays a role in the regulation of stomatal function by modulating extracellular ATP levels in guard cells. The protein is Apyrase 1 (APY1) of Arabidopsis thaliana (Mouse-ear cress).